We begin with the raw amino-acid sequence, 984 residues long: Mineralocorticoid receptor (984 aa).

A modulating region spans residues 1–602; sequence METKGYHSLP…STGSSRPSKI (602 aa). Polar residues predominate over residues 231–243; it reads QGTPLTCSPNVEN. Disordered regions lie at residues 231–329 and 347–373; these read QGTP…AAST and GTSAGSSTLRDVVPSPDTQEKGAQEVP. 5 positions are modified to phosphoserine: serine 250, serine 259, serine 283, serine 287, and serine 299. The span at 259–291 shows a compositional bias: low complexity; sequence SPLSSPLSSMKSSISSPPSHCSVKSPVSSPNNV. Residues 292 to 329 show a composition bias toward polar residues; sequence TLRSSVSSPANINNSRCSVSSPSNTNNRSTLSSPAAST. Zn(2+)-binding residues include cysteine 603, cysteine 606, cysteine 620, cysteine 623, cysteine 639, cysteine 645, cysteine 655, and cysteine 658. 2 consecutive NR C4-type zinc fingers follow at residues 603–623 and 639–663; these read CLVCGDEASGCHYGVVTCGSC and CAGRNDCIIDKIRRKNCPACRLQKC. The segment at residues 603–668 is a DNA-binding region (nuclear receptor); it reads CLVCGDEASG…RLQKCLQAGM (66 aa). The segment at 669-725 is hinge; that stretch reads NLGARKSKKLGKLKGIHEEQPQQQQPPPPPPPPQSPEEGTTYIAPAKEPSVNTALVP. Residues 684–710 are disordered; sequence IHEEQPQQQQPPPPPPPPQSPEEGTTY. Positions 692–703 are enriched in pro residues; it reads QQPPPPPPPPQS. Residues 726–964 form the NR LBD domain; it reads QLSTISRALT…EFPAMLVEII (239 aa). 21-hydroxyprogesterone is bound by residues asparagine 770 and glutamine 776. Aldosterone contacts are provided by asparagine 770 and glutamine 776. Positions 770 and 776 each coordinate progesterone. The segment at 782 to 785 is important for coactivator binding; that stretch reads KWAK. Positions 817 and 945 each coordinate 21-hydroxyprogesterone. Residues arginine 817 and threonine 945 each contribute to the aldosterone site. Arginine 817 and threonine 945 together coordinate progesterone.

It belongs to the nuclear hormone receptor family. NR3 subfamily. Heteromultimeric cytoplasmic complex with HSP90, HSP70, and FKBP4, in the absence of ligand. After ligand binding, it translocates to the nucleus and binds to DNA as a homodimer and as a heterodimer with NR3C1. May interact with HSD11B2 in the absence of ligand. Binds the coactivators NCOA1, NCOA2, TIF1 and NRIP1. Phosphorylated. In terms of tissue distribution, ubiquitous. Highly expressed in distal tubules, convoluted tubules and cortical collecting duct in kidney, and in sweat glands. Detected at lower levels in cardiomyocytes, in epidermis and in colon enterocytes.

The protein resides in the cytoplasm. Its subcellular location is the nucleus. It localises to the endoplasmic reticulum membrane. Its function is as follows. Receptor for both mineralocorticoids (MC) such as aldosterone and glucocorticoids (GC) such as corticosterone or cortisol. Binds to mineralocorticoid response elements (MRE) and transactivates target genes. The effect of MC is to increase ion and water transport and thus raise extracellular fluid volume and blood pressure and lower potassium levels. The protein is Mineralocorticoid receptor (NR3C2) of Homo sapiens (Human).